The sequence spans 741 residues: Hemolysin (741 aa).

The N-terminal stretch at 1-25 is a signal peptide; it reads MPKLNRCAIAIFTILSAISSPTLLA. The propeptide occupies 26–157; it reads NINEPSGEAA…RSGFASPAPA (132 aa). Intrachain disulfides connect cysteine 182–cysteine 200, cysteine 497–cysteine 511, and cysteine 537–cysteine 549. In terms of domain architecture, Ricin B-type lectin spans 484–575; it reads RPVNLQLASF…LTNVYSGESL (92 aa). The tract at residues 607–741 is beta-prism domain; the sequence is NAQESSPILG…LVKGVQFDLN (135 aa).

This sequence belongs to the HlyA hemolysin family. In terms of assembly, monomer. Homoheptamer. After binding to target membranes the protein assembles into a heptameric pre-pore complex. Proteolytic cleavage triggers a conformation change that is required for membrane insertion and pore formation. In terms of processing, proteolytical cleavage is required to convert the 80 kDa hemolysin precursor into the active 65 kDa hemolysin.

The protein localises to the secreted. It is found in the host cell membrane. Functionally, bacterial hemolysin that causes cytolysis by forming heptameric pores in target host membranes. The protein is Hemolysin (hlyA) of Vibrio cholerae serotype O1 (strain ATCC 39315 / El Tor Inaba N16961).